Here is a 163-residue protein sequence, read N- to C-terminus: Putative 4-hydroxy-4-methyl-2-oxoglutarate aldolase (163 aa).

Residues 76–79 (GDMI) and Arg98 contribute to the substrate site. An a divalent metal cation-binding site is contributed by Asp99.

This sequence belongs to the class II aldolase/RraA-like family. Homotrimer. A divalent metal cation serves as cofactor.

The catalysed reaction is 4-hydroxy-4-methyl-2-oxoglutarate = 2 pyruvate. It carries out the reaction oxaloacetate + H(+) = pyruvate + CO2. Functionally, catalyzes the aldol cleavage of 4-hydroxy-4-methyl-2-oxoglutarate (HMG) into 2 molecules of pyruvate. Also contains a secondary oxaloacetate (OAA) decarboxylase activity due to the common pyruvate enolate transition state formed following C-C bond cleavage in the retro-aldol and decarboxylation reactions. This is Putative 4-hydroxy-4-methyl-2-oxoglutarate aldolase from Pseudomonas fluorescens (strain Pf0-1).